A 378-amino-acid polypeptide reads, in one-letter code: Acetylornithine deacetylase (378 aa).

His76 is a binding site for Zn(2+). Asp78 is a catalytic residue. Asp108 provides a ligand contact to Zn(2+). Glu140 is an active-site residue. Residues Glu141, Glu165, and His351 each coordinate Zn(2+).

The protein belongs to the peptidase M20A family. ArgE subfamily. Homodimer. Requires Zn(2+) as cofactor. Co(2+) is required as a cofactor. Glutathione serves as cofactor.

The protein resides in the cytoplasm. It carries out the reaction N(2)-acetyl-L-ornithine + H2O = L-ornithine + acetate. It functions in the pathway amino-acid biosynthesis; L-arginine biosynthesis; L-ornithine from N(2)-acetyl-L-ornithine (linear): step 1/1. In terms of biological role, catalyzes the hydrolysis of the amide bond of N(2)-acetylated L-amino acids. Cleaves the acetyl group from N-acetyl-L-ornithine to form L-ornithine, an intermediate in L-arginine biosynthesis pathway, and a branchpoint in the synthesis of polyamines. This Vibrio campbellii (strain ATCC BAA-1116) protein is Acetylornithine deacetylase.